The primary structure comprises 568 residues: Urease subunit alpha (568 aa).

Residues 132-568 form the Urease domain; that stretch reads GAIDTHVHYI…LPLAQLYNLF (437 aa). H137, H139, and K219 together coordinate Ni(2+). K219 carries the post-translational modification N6-carboxylysine. H221 lines the substrate pocket. The Ni(2+) site is built by H248 and H274. The active-site Proton donor is the H322. D362 is a Ni(2+) binding site.

This sequence belongs to the metallo-dependent hydrolases superfamily. Urease alpha subunit family. In terms of assembly, heterotrimer of UreA (gamma), UreB (beta) and UreC (alpha) subunits. Three heterotrimers associate to form the active enzyme. Ni cation is required as a cofactor. Post-translationally, carboxylation allows a single lysine to coordinate two nickel ions.

It localises to the cytoplasm. The enzyme catalyses urea + 2 H2O + H(+) = hydrogencarbonate + 2 NH4(+). The protein operates within nitrogen metabolism; urea degradation; CO(2) and NH(3) from urea (urease route): step 1/1. The chain is Urease subunit alpha from Azobacteroides pseudotrichonymphae genomovar. CFP2.